A 65-amino-acid polypeptide reads, in one-letter code: Large ribosomal subunit protein bL35 (65 aa).

A compositionally biased stretch (basic and acidic residues) spans 1–10; that stretch reads MPKMKTDRGA. The interval 1-24 is disordered; sequence MPKMKTDRGAAKRFKKTGSGGFKC.

The protein belongs to the bacterial ribosomal protein bL35 family.

In Tolumonas auensis (strain DSM 9187 / NBRC 110442 / TA 4), this protein is Large ribosomal subunit protein bL35.